Reading from the N-terminus, the 276-residue chain is MALDFIEILKVIFLGIVEGITEWLPISSTGHMLLVDEFITLNMSEAFKEMFFVVIQLGAILAVVVMFWNKMFPFQFKNKSQSIIKKDTFSLWFKVAVACVPSAIMGILFDDYLDAHLHTPVVIAIMLILYGVLFIVIENRNKKRTATTSTLADISYKTALMIGVFQVLSLIPGTSRSGATIIGALLIGVSRVAAAEFTFFLAVPTMLGASAFKLLKFGFDFTSAELLTLVIGMAVAFAVSVFVIKFLMSYIKKHDFKVFGWYRIVLGILVLLITAI.

8 helical membrane passes run 6 to 26, 49 to 69, 89 to 109, 117 to 137, 151 to 171, 181 to 201, 224 to 244, and 256 to 276; these read IEIL…WLPI, EMFF…MFWN, FSLW…GILF, LHTP…FIVI, LADI…LSLI, IIGA…TFFL, AELL…VFVI, and FKVF…ITAI.

The protein belongs to the UppP family.

It localises to the cell membrane. It carries out the reaction di-trans,octa-cis-undecaprenyl diphosphate + H2O = di-trans,octa-cis-undecaprenyl phosphate + phosphate + H(+). Catalyzes the dephosphorylation of undecaprenyl diphosphate (UPP). Confers resistance to bacitracin. The polypeptide is Undecaprenyl-diphosphatase (Enterococcus faecalis (Streptococcus faecalis)).